We begin with the raw amino-acid sequence, 425 residues long: Histidine--tRNA ligase (425 aa).

Belongs to the class-II aminoacyl-tRNA synthetase family. As to quaternary structure, homodimer.

It is found in the cytoplasm. The enzyme catalyses tRNA(His) + L-histidine + ATP = L-histidyl-tRNA(His) + AMP + diphosphate + H(+). The polypeptide is Histidine--tRNA ligase (Chlorobium chlorochromatii (strain CaD3)).